Reading from the N-terminus, the 153-residue chain is Protein-export protein SecB (153 aa).

This sequence belongs to the SecB family. As to quaternary structure, homotetramer, a dimer of dimers. One homotetramer interacts with 1 SecA dimer.

Its subcellular location is the cytoplasm. Its function is as follows. One of the proteins required for the normal export of preproteins out of the cell cytoplasm. It is a molecular chaperone that binds to a subset of precursor proteins, maintaining them in a translocation-competent state. It also specifically binds to its receptor SecA. This is Protein-export protein SecB from Edwardsiella ictaluri (strain 93-146).